The following is a 3391-amino-acid chain: Genome polyprotein (3391 aa).

Positions 1-15 are interaction with host EXOC1; sequence MNNQRKKTARPSFNM. Topologically, residues 1–101 are cytoplasmic; that stretch reads MNNQRKKTAR…LNIMNRRKRS (101 aa). The segment at 37-72 is hydrophobic; homodimerization of capsid protein C; that stretch reads LLSGQGPMKLVMAFIAFLRFLAIPPTAGILARWGSF. The propeptide at 101-114 is ER anchor for the capsid protein C, removed in mature form by serine protease NS3; it reads SVTMLLMLLPTALA. Residues 102–119 form a helical membrane-spanning segment; the sequence is VTMLLMLLPTALAFHLTT. At 120–242 the chain is on the extracellular side; the sequence is RGGEPHMIVS…QIQRVETWAL (123 aa). A glycan (N-linked (GlcNAc...) asparagine; by host) is linked at N183. A helical membrane pass occupies residues 243-260; it reads RHPGFTVIALFLAHAIGT. Residue S261 is a topological domain, cytoplasmic. Residues 262–280 form a helical membrane-spanning segment; sequence ITQKGIIFILLMLVTPSMA. Residues 281 to 725 lie on the Extracellular side of the membrane; it reads MRCVGIGSRD…HQVFGTAYGV (445 aa). Intrachain disulfides connect C283-C310, C340-C401, C354-C385, and C372-C396. N347 is a glycosylation site (N-linked (GlcNAc...) asparagine; by host). The interval 378–391 is fusion peptide; sequence DRGWGNGCGLFGKG. A glycan (N-linked (GlcNAc...) asparagine; by host) is linked at N433. Intrachain disulfides connect C465/C565 and C582/C613. Residues 726–746 traverse the membrane as a helical segment; the sequence is LFSGVSWTMKIGIGILLTWLG. The Cytoplasmic portion of the chain corresponds to 747-752; sequence LNSRST. Residues 753–773 form a helical membrane-spanning segment; that stretch reads SLSMTCIAVGMVTLYLGVMVQ. At 774-1198 the chain is on the extracellular side; the sequence is ADSGCVINWK…NASDRMGMGT (425 aa). 6 disulfides stabilise this stretch: C778-C789, C829-C917, C953-C997, C1054-C1103, C1065-C1087, and C1086-C1090. Residues N904 and N981 are each glycosylated (N-linked (GlcNAc...) asparagine; by host). N-linked (GlcNAc...) asparagine; by host glycosylation is present at N1189. Residues 1199–1219 form a helical membrane-spanning segment; sequence TYLALMATFKMRPMFAVGLLF. At 1220–1225 the chain is on the cytoplasmic side; it reads RRLTSR. A helical transmembrane segment spans residues 1226–1244; sequence EVLLLTIGLSLVASVELPN. Residues 1245 to 1268 lie on the Lumenal side of the membrane; it reads SLEELGDGLAMGIMILKLLTDFQS. The helical transmembrane segment at 1269–1289 threads the bilayer; it reads HQLWATLLSLTFVKTTFSLHY. Residue A1290 is a topological domain, cytoplasmic. A helical transmembrane segment spans residues 1291–1309; that stretch reads WKTMAMVLSIVSLFPLCLS. Residues 1310–1314 lie on the Lumenal side of the membrane; the sequence is TTSQK. A helical transmembrane segment spans residues 1315 to 1335; that stretch reads TTWLPVLLGSLGCKPLTMFLI. Residues 1336–1345 lie on the Cytoplasmic side of the membrane; it reads AENKIWGRKS. Residues 1346–1366 form a helical membrane-spanning segment; the sequence is WPLNEGIMAVGIVSILLSSLL. The Lumenal portion of the chain corresponds to 1367-1369; it reads KND. The chain crosses the membrane as a helical span at residues 1370–1390; sequence VPLAGPLIAGGMLIACYVISG. Topologically, residues 1391–1446 are cytoplasmic; that stretch reads SSADLSLEKAAEVSWEEEAEHSGASHNILVEVQDDGTMKIKDEERDDTLTILLKAT. An interacts with and activates NS3 protease region spans residues 1397-1436; sequence LEKAAEVSWEEEAEHSGASHNILVEVQDDGTMKIKDEERD. An intramembrane region (helical) is located at residues 1447–1467; it reads LLAVSGVYPLSIPATLFVWYF. The Cytoplasmic portion of the chain corresponds to 1468 to 2147; sequence WQKKKQRSGV…MEELPDTIET (680 aa). Residues 1475–1652 enclose the Peptidase S7 domain; sequence SGVLWDTPSP…KASQEGPLPE (178 aa). Active-site charge relay system; for serine protease NS3 activity residues include H1525, D1549, and S1609. The 157-residue stretch at 1655 to 1811 folds into the Helicase ATP-binding domain; the sequence is DEVFRKRNLT…QSNAVIQDEE (157 aa). The tract at residues 1659-1662 is important for RNA-binding; that stretch reads RKRN. 1668 to 1675 lines the ATP pocket; it reads LHPGSGKT. The DEAH box signature appears at 1759–1762; the sequence is DEAH. The region spanning 1821-1988 is the Helicase C-terminal domain; it reads SGYEWITDFP…IIPALFEPER (168 aa). Position 1863 is an N6-acetyllysine; by host (K1863). Residues 2148 to 2168 traverse the membrane as a helical segment; sequence LMLLALIAVLTGGVTLFFLSG. At 2169 to 2170 the chain is on the lumenal side; the sequence is KG. An intramembrane region (helical) is located at residues 2171–2191; that stretch reads LGKTSIGLLCVMASSVLLWMA. Residue S2192 is a topological domain, lumenal. A helical transmembrane segment spans residues 2193–2213; the sequence is VEPHWIAASIILEFFLMVLLI. Residues 2214–2228 are Cytoplasmic-facing; sequence PEPDRQRTPQDNQLA. The chain crosses the membrane as a helical span at residues 2229-2249; it reads YVVIGLLFMILTVAANEMGLL. The Lumenal portion of the chain corresponds to 2250–2275; that stretch reads ETTKKDLGIGHVAAENHHHATMLDVD. The helical intramembrane region spans 2276–2296; it reads LRPASAWTLYAVATTVITPMM. Over 2297–2348 the chain is Lumenal; that stretch reads RHTIENTTANISLTAIANQAAILMGLDKGWPISKMDIGVPLLALGCYSQVNP. N-linked (GlcNAc...) asparagine; by host glycans are attached at residues N2302 and N2306. Residues 2349-2369 form a helical membrane-spanning segment; the sequence is LTLTAAVLMLVAHYAIIGPGL. Residues 2370–2414 are Cytoplasmic-facing; it reads QAKATREAQKRTAAGIMKNPTVDGIVAIDLDPVVYDAKFEKQLGQ. The helical transmembrane segment at 2415 to 2435 threads the bilayer; the sequence is IMLLILCTSQILLMRTTWALC. Residues 2436-2460 are Lumenal-facing; it reads ESITLATGPLTTLWEGSPGKFWNTT. N-linked (GlcNAc...) asparagine; by host glycosylation occurs at N2458. A helical membrane pass occupies residues 2461–2481; sequence IAVSMANIFRGSYLAGAGLAF. The Cytoplasmic portion of the chain corresponds to 2482–3391; it reads SLMKSLGGGR…NESDPEGALW (910 aa). The region spanning 2494–2755 is the mRNA cap 0-1 NS5-type MT domain; it reads TGAKGKHWER…DVDLGAGTRH (262 aa). Residue S2548 participates in S-adenosyl-L-methionine binding. S2548 carries the post-translational modification Phosphoserine. The For 2'-O-MTase activity role is filled by K2553. Positions 2569 to 2572 match the SUMO-interacting motif motif; the sequence is VIDL. 6 residues coordinate S-adenosyl-L-methionine: G2578, W2579, T2596, K2597, D2623, and V2624. The active-site For 2'-O-MTase activity is D2638. I2639 contacts S-adenosyl-L-methionine. Active-site for 2'-O-MTase activity residues include K2672 and E2708. An S-adenosyl-L-methionine-binding site is contributed by Y2710. 4 residues coordinate Zn(2+): E2929, H2933, C2938, and C2941. The RdRp catalytic domain maps to 3019–3168; the sequence is GNMYADDTAG…KPIDDRFATA (150 aa). 3 residues coordinate Zn(2+): H3203, C3219, and C3338.

This sequence in the N-terminal section; belongs to the class I-like SAM-binding methyltransferase superfamily. mRNA cap 0-1 NS5-type methyltransferase family. In terms of assembly, homodimer. Interacts (via N-terminus) with host EXOC1 (via C-terminus); this interaction results in EXOC1 degradation through the proteasome degradation pathway. As to quaternary structure, forms heterodimers with envelope protein E in the endoplasmic reticulum and Golgi. Homodimer; in the endoplasmic reticulum and Golgi. Interacts with protein prM. Interacts with non-structural protein 1. In terms of assembly, homodimer; Homohexamer when secreted. Interacts with envelope protein E. As to quaternary structure, interacts (via N-terminus) with serine protease NS3. Forms a heterodimer with serine protease NS3. May form homooligomers. In terms of assembly, forms a heterodimer with NS2B. Interacts with NS4B. Interacts with unphosphorylated RNA-directed RNA polymerase NS5; this interaction stimulates RNA-directed RNA polymerase NS5 guanylyltransferase activity. Interacts with host SHFL. As to quaternary structure, interacts with host MAVS; this interaction inhibits the synthesis of IFN-beta. Interacts with host SHFL. Interacts with host AUP1; the interaction occurs in the presence of Dengue virus NS4B and induces lipophagy which facilitates production of virus progeny particles. Interacts with serine protease NS3. In terms of assembly, homodimer. Interacts with host STAT2; this interaction inhibits the phosphorylation of the latter, and, when all viral proteins are present (polyprotein), targets STAT2 for degradation. Interacts with serine protease NS3. Specific enzymatic cleavages in vivo yield mature proteins. Cleavages in the lumen of endoplasmic reticulum are performed by host signal peptidase, whereas cleavages in the cytoplasmic side are performed by serine protease NS3. Signal cleavage at the 2K-4B site requires a prior NS3 protease-mediated cleavage at the 4A-2K site. Post-translationally, cleaved in post-Golgi vesicles by a host furin, releasing the mature small envelope protein M, and peptide pr. This cleavage is incomplete as up to 30% of viral particles still carry uncleaved prM. In terms of processing, N-glycosylated. N-glycosylated. The excreted form is glycosylated and this is required for efficient secretion of the protein from infected cells. Post-translationally, acetylated by host KAT5. Acetylation modulates NS3 RNA-binding and unwinding activities and plays an important positive role for viral replication. In terms of processing, sumoylation of RNA-directed RNA polymerase NS5 increases NS5 protein stability allowing proper viral RNA replication. Phosphorylated on serines residues. This phosphorylation may trigger NS5 nuclear localization.

It is found in the virion. The protein resides in the host nucleus. The protein localises to the host cytoplasm. It localises to the host perinuclear region. Its subcellular location is the secreted. It is found in the virion membrane. The protein resides in the host endoplasmic reticulum membrane. The protein localises to the host mitochondrion. It catalyses the reaction Selective hydrolysis of -Xaa-Xaa-|-Yaa- bonds in which each of the Xaa can be either Arg or Lys and Yaa can be either Ser or Ala.. The enzyme catalyses RNA(n) + a ribonucleoside 5'-triphosphate = RNA(n+1) + diphosphate. It carries out the reaction a ribonucleoside 5'-triphosphate + H2O = a ribonucleoside 5'-diphosphate + phosphate + H(+). The catalysed reaction is ATP + H2O = ADP + phosphate + H(+). It catalyses the reaction a 5'-end (5'-triphosphoguanosine)-ribonucleoside in mRNA + S-adenosyl-L-methionine = a 5'-end (N(7)-methyl 5'-triphosphoguanosine)-ribonucleoside in mRNA + S-adenosyl-L-homocysteine. The enzyme catalyses a 5'-end (N(7)-methyl 5'-triphosphoguanosine)-ribonucleoside in mRNA + S-adenosyl-L-methionine = a 5'-end (N(7)-methyl 5'-triphosphoguanosine)-(2'-O-methyl-ribonucleoside) in mRNA + S-adenosyl-L-homocysteine + H(+). Functionally, plays a role in virus budding by binding to the cell membrane and gathering the viral RNA into a nucleocapsid that forms the core of a mature virus particle. During virus entry, may induce genome penetration into the host cytoplasm after hemifusion induced by the surface proteins. Can migrate to the cell nucleus where it modulates host functions. Overcomes the anti-viral effects of host EXOC1 by sequestering and degrading the latter through the proteasome degradation pathway. Inhibits RNA silencing by interfering with host Dicer. In terms of biological role, prevents premature fusion activity of envelope proteins in trans-Golgi by binding to envelope protein E at pH6.0. After virion release in extracellular space, gets dissociated from E dimers. Its function is as follows. Acts as a chaperone for envelope protein E during intracellular virion assembly by masking and inactivating envelope protein E fusion peptide. prM is the only viral peptide matured by host furin in the trans-Golgi network probably to avoid catastrophic activation of the viral fusion activity in acidic Golgi compartment prior to virion release. prM-E cleavage is inefficient, and many virions are only partially matured. These uncleaved prM would play a role in immune evasion. Functionally, may play a role in virus budding. Exerts cytotoxic effects by activating a mitochondrial apoptotic pathway through M ectodomain. May display a viroporin activity. Binds to host cell surface receptor and mediates fusion between viral and cellular membranes. Envelope protein is synthesized in the endoplasmic reticulum in the form of heterodimer with protein prM. They play a role in virion budding in the ER, and the newly formed immature particle is covered with 60 spikes composed of heterodimer between precursor prM and envelope protein E. The virion is transported to the Golgi apparatus where the low pH causes dissociation of PrM-E heterodimers and formation of E homodimers. prM-E cleavage is inefficient, and many virions are only partially matured. These uncleaved prM would play a role in immune evasion. In terms of biological role, involved in immune evasion, pathogenesis and viral replication. Once cleaved off the polyprotein, is targeted to three destinations: the viral replication cycle, the plasma membrane and the extracellular compartment. Essential for viral replication. Required for formation of the replication complex and recruitment of other non-structural proteins to the ER-derived membrane structures. Excreted as a hexameric lipoparticle that plays a role against host immune response. Antagonizing the complement function. Binds to the host macrophages and dendritic cells. Inhibits signal transduction originating from Toll-like receptor 3 (TLR3). Its function is as follows. Disrupts the host endothelial glycocalyx layer of host pulmonary microvascular endothelial cells, inducing degradation of sialic acid and shedding of heparan sulfate proteoglycans. NS1 induces expression of sialidases, heparanase, and activates cathepsin L, which activates heparanase via enzymatic cleavage. These effects are probably linked to the endothelial hyperpermeability observed in severe dengue disease. Functionally, component of the viral RNA replication complex that functions in virion assembly and antagonizes the host immune response. Required cofactor for the serine protease function of NS3. May have membrane-destabilizing activity and form viroporins. In terms of biological role, displays three enzymatic activities: serine protease, NTPase and RNA c. NS3 serine protease, in association with NS2B, performs its autocleavage and cleaves the polyprotein at dibasic sites in the cytoplasm: C-prM, NS2A-NS2B, NS2B-NS3, NS3-NS4A, NS4A-2K and NS4B-NS5. NS3 RNA helicase binds RNA and unwinds dsRNA in the 3' to 5' direction. Its function is as follows. Regulates the ATPase activity of the NS3 helicase activity. NS4A allows NS3 helicase to conserve energy during unwinding. Plays a role in the inhibition of the host innate immune response. Interacts with host MAVS and thereby prevents the interaction between RIGI and MAVS. In turn, IFN-beta production is impaired. Interacts with host AUP1 which mediates induction of lipophagy in host cells and facilitates production of virus progeny particles. Functionally, functions as a signal peptide for NS4B and is required for the interferon antagonism activity of the latter. Induces the formation of ER-derived membrane vesicles where the viral replication takes place. Inhibits interferon (IFN)-induced host STAT1 phosphorylation and nuclear translocation, thereby preventing the establishment of cellular antiviral state by blocking the IFN-alpha/beta pathway. In terms of biological role, replicates the viral (+) and (-) RNA genome, and performs the capping of genomes in the cytoplasm. NS5 methylates viral RNA cap at guanine N-7 and ribose 2'-O positions. Besides its role in RNA genome replication, also prevents the establishment of cellular antiviral state by blocking the interferon-alpha/beta (IFN-alpha/beta) signaling pathway. Inhibits host TYK2 and STAT2 phosphorylation, thereby preventing activation of JAK-STAT signaling pathway. The sequence is that of Genome polyprotein from Aedes aegypti (Yellowfever mosquito).